A 571-amino-acid chain; its full sequence is Optineurin (571 aa).

Disordered stretches follow at residues 1-32 (MSHQPLSCLTEKGDSPSESTGNGPPHLAHPNL) and 100-144 (LSHE…DQLR). Positions 38–170 (EELLQQMKEL…VSELQLKLNS (133 aa)) form a coiled coil. The interaction with Rab8 stretch occupies residues 58 to 209 (MKLNNQAMKG…GPTRTVSIGT (152 aa)). Composition is skewed to basic and acidic residues over residues 100-123 (LSHENEKLKEELGKLKGKSERSSE) and 130-143 (RLPRAEAEQEKDQL). An LIR motif is present at residues 176-181 (DSFVEI). Serine 177 is subject to Phosphoserine; by TBK1. Over residues 186–197 (GEAEGSVKEIKH) the composition is skewed to basic and acidic residues. Disordered regions lie at residues 186–210 (GEAEGSVKEIKHSPGPTRTVSIGTS) and 255–291 (VSDFEKKASNRSEIETQTEGSTEKENEEEKGPETVGS). A Phosphoserine modification is found at serine 198. The segment covering 201 to 210 (PTRTVSIGTS) has biased composition (polar residues). A coiled-coil region spans residues 233–502 (CLREGNQKVE…LLKENDAFED (270 aa)). 2 stretches are compositionally biased toward basic and acidic residues: residues 255–268 (VSDFEKKASNRSEI) and 275–286 (STEKENEEEKGP). Serine 336 carries the post-translational modification Phosphoserine. An interaction with HD region spans residues 405 to 571 (TRKESEKVDR…LQIHVMDCII (167 aa)). The tract at residues 406-514 (RKESEKVDRA…RQSLMEMQSR (109 aa)) is interaction with MYO6. Positions 468 to 473 (DFHAER) match the UBAN motif. At serine 520 the chain carries Phosphoserine. The segment at 541–571 (QRNIPIHSCPKCGEVLPDIDTLQIHVMDCII) adopts a CCHC NOA-type zinc-finger fold. The Zn(2+) site is built by cysteine 549, cysteine 552, histidine 565, and cysteine 569.

As to quaternary structure, self-associates. Interacts with HD. Interacts with GTF3A. Interacts with MYO6. Interacts (via UBAN) with ubiquitinated TFRC. Interacts with GTP-bound Rab8 (RAB8A and/or RAB8B). Interacts with TBC1D17. Interacts with TBK1. Interacts with TRAF3. Binds to linear ubiquitin chains. Interacts with LC3 family members MAP1LC3A, MAP1LC3B, GABARAP, GABARAPL1 and GABARAPL2; OPTN phosphorylation increases the association (at least with MAP1LC3B). Interacts with RAB12; the interaction may be indirect. Interacts with TBK1; this interaction leads to the Golgi localization of TBK1 and its subsequent activation. Interacts with palmitoyltransferase ZDHHC17/HIP14; the interaction does not lead to palmitoylation of OPTN. Interacts with CYLD. Interacts with TOM1; the interaction is indirect and is mediated by MYO6, which acts as a bridge between TOM1 and OPTN. Interacts with USP12; the interaction is independent of USP12 deubiquitinase activity and may be involved in regulation of autophagic flux. Post-translationally, phosphorylated by TBK1, leading to restrict bacterial proliferation in case of infection.

It localises to the cytoplasm. It is found in the perinuclear region. The protein localises to the golgi apparatus. The protein resides in the trans-Golgi network. Its subcellular location is the cytoplasmic vesicle. It localises to the autophagosome. It is found in the recycling endosome. Functionally, plays an important role in the maintenance of the Golgi complex, in membrane trafficking, in exocytosis, through its interaction with myosin VI and Rab8. Links myosin VI to the Golgi complex and plays an important role in Golgi ribbon formation. Negatively regulates the induction of IFNB in response to RNA virus infection. Plays a neuroprotective role in the eye and optic nerve. Probably part of the TNF-alpha signaling pathway that can shift the equilibrium toward induction of cell death. May act by regulating membrane trafficking and cellular morphogenesis via a complex that contains Rab8 and huntingtin (HD). Mediates the interaction of Rab8 with the probable GTPase-activating protein TBC1D17 during Rab8-mediated endocytic trafficking, such as that of transferrin receptor (TFRC/TfR); regulates Rab8 recruitment to tubules emanating from the endocytic recycling compartment. Autophagy receptor that interacts directly with both the cargo to become degraded and an autophagy modifier of the MAP1 LC3 family; targets ubiquitin-coated bacteria (xenophagy) and appears to function in the same pathway as SQSTM1 and CALCOCO2/NDP52. This is Optineurin (OPTN) from Macaca fascicularis (Crab-eating macaque).